Consider the following 1414-residue polypeptide: DNA-directed RNA polymerase subunit beta'' (1414 aa).

Residues C220, C293, C300, and C303 each coordinate Zn(2+).

This sequence belongs to the RNA polymerase beta' chain family. RpoC2 subfamily. As to quaternary structure, in plastids the minimal PEP RNA polymerase catalytic core is composed of four subunits: alpha, beta, beta', and beta''. When a (nuclear-encoded) sigma factor is associated with the core the holoenzyme is formed, which can initiate transcription. Zn(2+) serves as cofactor.

The protein resides in the plastid. The protein localises to the chloroplast. The catalysed reaction is RNA(n) + a ribonucleoside 5'-triphosphate = RNA(n+1) + diphosphate. Functionally, DNA-dependent RNA polymerase catalyzes the transcription of DNA into RNA using the four ribonucleoside triphosphates as substrates. This Angiopteris evecta (Mule's foot fern) protein is DNA-directed RNA polymerase subunit beta''.